Here is a 297-residue protein sequence, read N- to C-terminus: F-box only protein 2 (297 aa).

The segment at 1–47 (MDGDGDPESVSHPEEASPEEQPEEAGAEASAEEEQLREAEEEEEAEA) is disordered. Residues 16–47 (ASPEEQPEEAGAEASAEEEQLREAEEEEEAEA) are compositionally biased toward acidic residues. The region spanning 48–95 (VEYLAELPEPLLLRVLAELPATELVQACRLVCLRWKELVDGAPLWLLK) is the F-box domain. Ser-106 carries the phosphoserine modification. The region spanning 117 to 297 (FYFLSKRRRN…VTNSSVWVEP (181 aa)) is the FBA domain. A carbohydrate contacts are provided by residues 214-216 (RTD) and 279-280 (YW).

As to quaternary structure, component of the SCF(FBXO2) complex consisting of CUL1, RBX1, SKP1 and FBXO2. Predominantly detected as heterodimer with SKP1; the heterodimer with SKP1 is not part of the SCF(FBXO2) complex. As to expression, detected in brain and cochlea, in epithelial support cells and hair cells of the organ of Corti (at protein level).

It localises to the cytoplasm. The protein resides in the microsome membrane. It functions in the pathway protein modification; protein ubiquitination. Functionally, substrate recognition component of a SCF (SKP1-CUL1-F-box protein) E3 ubiquitin-protein ligase complex that mediates the ubiquitination and subsequent proteasomal degradation of target proteins. Involved in the endoplasmic reticulum-associated degradation pathway (ERAD) for misfolded lumenal proteins by recognizing and binding sugar chains on unfolded glycoproteins that are retrotranslocated into the cytosol and promoting their ubiquitination and subsequent degradation. Prevents formation of cytosolic aggregates of unfolded glycoproteins that have been retrotranslocated into the cytosol. Able to recognize and bind denatured glycoproteins, preferentially those of the high-mannose type. This is F-box only protein 2 (Fbxo2) from Mus musculus (Mouse).